Here is a 233-residue protein sequence, read N- to C-terminus: MTEESHPLRGAGNFFGRRHGKPLRSHQKNLFEDLLPRLKINVENPAPQDLRTLFEAKVDAVRLEIGFGGGEHLHHETGRYPQTGFIGVEPFINGMAKMLAALDGEPRSNLRLYDEDATAVLDWLPDASLSGIDLFYPDPWHKRRHWKRRFVSDANLDRFARVLKPGAKFRFASDIEHYVNWTLQHCRRHPAFDWQAEGPSDWNHAYEGWPGTRYEAKAFREGRRAAYLTFIRR.

Residues 1-21 (MTEESHPLRGAGNFFGRRHGK) form a disordered region. Positions 64, 89, 116, and 138 each coordinate S-adenosyl-L-methionine. Aspartate 138 is a catalytic residue. Substrate is bound by residues lysine 142, aspartate 174, and 212–215 (TRYE).

It belongs to the class I-like SAM-binding methyltransferase superfamily. TrmB family.

It carries out the reaction guanosine(46) in tRNA + S-adenosyl-L-methionine = N(7)-methylguanosine(46) in tRNA + S-adenosyl-L-homocysteine. The protein operates within tRNA modification; N(7)-methylguanine-tRNA biosynthesis. In terms of biological role, catalyzes the formation of N(7)-methylguanine at position 46 (m7G46) in tRNA. The sequence is that of tRNA (guanine-N(7)-)-methyltransferase from Brucella anthropi (strain ATCC 49188 / DSM 6882 / CCUG 24695 / JCM 21032 / LMG 3331 / NBRC 15819 / NCTC 12168 / Alc 37) (Ochrobactrum anthropi).